A 190-amino-acid chain; its full sequence is UPF0398 protein LAR_0869 (190 aa).

Belongs to the UPF0398 family.

This Limosilactobacillus reuteri subsp. reuteri (strain JCM 1112) (Lactobacillus reuteri) protein is UPF0398 protein LAR_0869.